Consider the following 205-residue polypeptide: Small ribosomal subunit protein uS3 (205 aa).

Residues 12 to 80 form the KH type-2 domain; that stretch reads VRQFLAKELA…PAQINIAEVR (69 aa).

Belongs to the universal ribosomal protein uS3 family. Part of the 30S ribosomal subunit. Forms a tight complex with proteins S10 and S14.

Functionally, binds the lower part of the 30S subunit head. Binds mRNA in the 70S ribosome, positioning it for translation. The chain is Small ribosomal subunit protein uS3 from Buchnera aphidicola subsp. Acyrthosiphon kondoi (Acyrthosiphon kondoi symbiotic bacterium).